The primary structure comprises 197 residues: Short chain dehydrogenase ausX (197 aa).

NADP(+) is bound by residues Ile49, Asp95, Arg157, and Tyr189. The active-site Proton acceptor is Tyr189. The active-site Proton donor is Tyr189.

Belongs to the short-chain dehydrogenases/reductases (SDR) family.

It functions in the pathway secondary metabolite biosynthesis; terpenoid biosynthesis. Its function is as follows. Short chain dehydrogenase; part of the gene cluster A that mediates the biosynthesis of austinol and dehydroaustinol, two fungal meroterpenoids. The first step of the pathway is the synthesis of 3,5-dimethylorsellinic acid by the polyketide synthase ausA. 3,5-dimethylorsellinic acid is then prenylated by the polyprenyl transferase ausN. Further epoxidation by the FAD-dependent monooxygenase ausM and cyclization by the probable terpene cyclase ausL lead to the formation of protoaustinoid A. Protoaustinoid A is then oxidized to spiro-lactone preaustinoid A3 by the combined action of the FAD-binding monooxygenases ausB and ausC, and the dioxygenase ausE. Acid-catalyzed keto-rearrangement and ring contraction of the tetraketide portion of preaustinoid A3 by ausJ lead to the formation of preaustinoid A4. The aldo-keto reductase ausK, with the help of ausH, is involved in the next step by transforming preaustinoid A4 into isoaustinone which is in turn hydroxylated by the P450 monooxygenase ausI to form austinolide. Finally, the cytochrome P450 monooxygenase ausG modifies austinolide to austinol. Austinol can be further modified to dehydroaustinol which forms a diffusible complex with diorcinol that initiates conidiation. Due to genetic rearrangements of the clusters and the subsequent loss of some enzymes, the end products of the Emericella nidulans austinoid biosynthesis clusters are austinol and dehydroaustinol, even if additional enzymes, such as the O-acetyltransferase ausQ and the cytochrome P450 monooxygenase ausR are still functional. The polypeptide is Short chain dehydrogenase ausX (Emericella nidulans (strain FGSC A4 / ATCC 38163 / CBS 112.46 / NRRL 194 / M139) (Aspergillus nidulans)).